The sequence spans 286 residues: Putative inorganic pyrophosphatase C3A12.02 (286 aa).

Arg85 is a diphosphate binding site. Mg(2+) is bound by residues Asp122, Asp127, and Asp159.

This sequence belongs to the PPase family. Mg(2+) is required as a cofactor.

The protein resides in the cytoplasm. The catalysed reaction is diphosphate + H2O = 2 phosphate + H(+). The polypeptide is Putative inorganic pyrophosphatase C3A12.02 (Schizosaccharomyces pombe (strain 972 / ATCC 24843) (Fission yeast)).